A 110-amino-acid chain; its full sequence is UPF0122 protein SERP0802 (110 aa).

The protein belongs to the UPF0122 family.

Might take part in the signal recognition particle (SRP) pathway. This is inferred from the conservation of its genetic proximity to ftsY/ffh. May be a regulatory protein. The chain is UPF0122 protein SERP0802 from Staphylococcus epidermidis (strain ATCC 35984 / DSM 28319 / BCRC 17069 / CCUG 31568 / BM 3577 / RP62A).